Reading from the N-terminus, the 568-residue chain is Glucose-6-phosphate isomerase, cytosolic 1 (568 aa).

Glu-360 (proton donor) is an active-site residue. Residues His-391 and Lys-516 contribute to the active site.

It belongs to the GPI family. In terms of assembly, homodimer.

The protein resides in the cytoplasm. The enzyme catalyses alpha-D-glucose 6-phosphate = beta-D-fructose 6-phosphate. It participates in carbohydrate degradation; glycolysis; D-glyceraldehyde 3-phosphate and glycerone phosphate from D-glucose: step 2/4. In Clarkia xantiana (Gunsight clarkia), this protein is Glucose-6-phosphate isomerase, cytosolic 1 (PGIC1).